The sequence spans 130 residues: Small ribosomal subunit protein uS11 (130 aa).

The protein belongs to the universal ribosomal protein uS11 family. As to quaternary structure, part of the 30S ribosomal subunit. Interacts with proteins S7 and S18. Binds to IF-3.

In terms of biological role, located on the platform of the 30S subunit, it bridges several disparate RNA helices of the 16S rRNA. Forms part of the Shine-Dalgarno cleft in the 70S ribosome. This is Small ribosomal subunit protein uS11 from Syntrophomonas wolfei subsp. wolfei (strain DSM 2245B / Goettingen).